The sequence spans 116 residues: uncharacterized protein (116 aa).

The 55-residue stretch at leucine 6–leucine 60 folds into the HTH cro/C1-type domain. Residues glutamine 17 to leucine 36 constitute a DNA-binding region (H-T-H motif).

This is an uncharacterized protein from Bacillus subtilis (strain 168).